Here is a 200-residue protein sequence, read N- to C-terminus: Holliday junction branch migration complex subunit RuvA (200 aa).

A domain I region spans residues Met-1 to His-64. Residues Asn-65–Pro-143 are domain II. The interval Ser-133–Gln-152 is disordered. The tract at residues Glu-144–Ser-148 is flexible linker. Positions Ser-149 to Thr-200 are domain III.

The protein belongs to the RuvA family. Homotetramer. Forms an RuvA(8)-RuvB(12)-Holliday junction (HJ) complex. HJ DNA is sandwiched between 2 RuvA tetramers; dsDNA enters through RuvA and exits via RuvB. An RuvB hexamer assembles on each DNA strand where it exits the tetramer. Each RuvB hexamer is contacted by two RuvA subunits (via domain III) on 2 adjacent RuvB subunits; this complex drives branch migration. In the full resolvosome a probable DNA-RuvA(4)-RuvB(12)-RuvC(2) complex forms which resolves the HJ.

Its subcellular location is the cytoplasm. Functionally, the RuvA-RuvB-RuvC complex processes Holliday junction (HJ) DNA during genetic recombination and DNA repair, while the RuvA-RuvB complex plays an important role in the rescue of blocked DNA replication forks via replication fork reversal (RFR). RuvA specifically binds to HJ cruciform DNA, conferring on it an open structure. The RuvB hexamer acts as an ATP-dependent pump, pulling dsDNA into and through the RuvAB complex. HJ branch migration allows RuvC to scan DNA until it finds its consensus sequence, where it cleaves and resolves the cruciform DNA. In Coxiella burnetii (strain Dugway 5J108-111), this protein is Holliday junction branch migration complex subunit RuvA.